We begin with the raw amino-acid sequence, 460 residues long: Mogroside I-E synthase (460 aa).

The Proton acceptor role is filled by histidine 25. The active-site Charge relay is the aspartate 114. Residues serine 286, cysteine 339, glutamine 341, tryptophan 359, asparagine 360, serine 361, glutamate 364, aspartate 380, and glutamine 381 each contribute to the UDP-alpha-D-glucose site.

This sequence belongs to the UDP-glycosyltransferase family. In terms of tissue distribution, highly expressed in young fruits 15 days after anthesis (15-DAA).

The enzyme catalyses mogrol + UDP-alpha-D-glucose = mogroside IE + UDP + H(+). It catalyses the reaction mogroside I-A1 + UDP-alpha-D-glucose = mogroside IIE + UDP + H(+). It carries out the reaction mogroside II-A1 + UDP-alpha-D-glucose = mogroside IIIX + UDP + H(+). The catalysed reaction is mogroside II-A + UDP-alpha-D-glucose = mogroside III + UDP + H(+). The enzyme catalyses mogroside III-A1 + UDP-alpha-D-glucose = siamenoside I + UDP + H(+). Its pathway is secondary metabolite biosynthesis; terpenoid biosynthesis. In terms of biological role, UDP-glycosyltransferase involved in the biosynthesis of cucurbitacin and mogroside tetracyclic triterpene natural products (e.g. siamenoside I and mogrosides IV, V and VI). Cucurbitacins have cytotoxic properties and exhibit deterrent taste as a defense barrier against herbivores. Mogrosides are nonsugar highly oxygenated compounds used as high-intensity zero-calorie sweeteners; they also possess pharmacological properties such as regulating immunity, lowering blood sugar and lipid levels, protecting the liver, and acting as antioxidants and antitumor agents. Catalyzes the C3 primary glucosylation of mogrol, mogroside I-A1, mogroside II-A1, mogroside II-A and mogroside III-A1. This is Mogroside I-E synthase from Siraitia grosvenorii (Monk's fruit).